The chain runs to 61 residues: Arabinogalactan protein 15 (61 aa).

Positions 1-22 are cleaved as a signal peptide; that stretch reads MAISKASIVVLMMVIISVVASA. Glutamine 23 is modified (pyrrolidone carboxylic acid). 4-hydroxyproline is present on residues proline 27, proline 29, and proline 31. Proline 27, proline 29, and proline 31 each carry an O-linked (Ara...) hydroxyproline glycan. The GPI-anchor amidated serine moiety is linked to residue serine 35. Residues 36–61 constitute a propeptide, removed in mature form; that stretch reads SAISASFVSAGVAAVAALVFGSALRI.

It belongs to the AG-peptide AGP family. Contains 4-hydroxyproline; hydroxylated on Pro-27, Pro-29 and Pro-31. Post-translationally, O-glycosylated on hydroxyprolines; noncontiguous hydroxylproline residues are glycosylated with arabinogalactan. In terms of tissue distribution, expressed in reproductive tissues. Expressed in chalaza, funiculus, stigma, septum, style, integument and transmitting tract.

Its subcellular location is the cell membrane. Its function is as follows. Proteoglycan that seems to be implicated in diverse developmental roles such as differentiation, cell-cell recognition, embryogenesis and programmed cell death. The protein is Arabinogalactan protein 15 of Arabidopsis thaliana (Mouse-ear cress).